The primary structure comprises 352 residues: NAD(+)-dependent homoserine dehydrogenase (352 aa).

This sequence belongs to the homoserine dehydrogenase family.

The enzyme catalyses L-homoserine + NAD(+) = L-aspartate 4-semialdehyde + NADH + H(+). Dehydrogenase involved in the degradation of canavanine, the delta-oxa-analog of arginine, allowing growth on canavanine as sole nitrogen and carbon source. Catalyzes the conversion of homoserine and NAD(+) to aspartate-semialdehyde and NADH. Is highly specific for NAD(+) and cannot use NADP(+). In Pseudomonas canavaninivorans, this protein is NAD(+)-dependent homoserine dehydrogenase.